Reading from the N-terminus, the 293-residue chain is Aspartate carbamoyltransferase catalytic subunit (293 aa).

Residues Arg-50 and Thr-51 each coordinate carbamoyl phosphate. Lys-78 contributes to the L-aspartate binding site. Residues Arg-100, His-127, and Gln-130 each contribute to the carbamoyl phosphate site. Residues Arg-160 and Arg-210 each coordinate L-aspartate. Carbamoyl phosphate-binding residues include Ala-253 and Pro-254.

It belongs to the aspartate/ornithine carbamoyltransferase superfamily. ATCase family. In terms of assembly, heterododecamer (2C3:3R2) of six catalytic PyrB chains organized as two trimers (C3), and six regulatory PyrI chains organized as three dimers (R2).

It catalyses the reaction carbamoyl phosphate + L-aspartate = N-carbamoyl-L-aspartate + phosphate + H(+). The protein operates within pyrimidine metabolism; UMP biosynthesis via de novo pathway; (S)-dihydroorotate from bicarbonate: step 2/3. Functionally, catalyzes the condensation of carbamoyl phosphate and aspartate to form carbamoyl aspartate and inorganic phosphate, the committed step in the de novo pyrimidine nucleotide biosynthesis pathway. The protein is Aspartate carbamoyltransferase catalytic subunit of Staphylococcus epidermidis (strain ATCC 35984 / DSM 28319 / BCRC 17069 / CCUG 31568 / BM 3577 / RP62A).